We begin with the raw amino-acid sequence, 716 residues long: Mitogen-activated protein kinase kinase kinase 5 (716 aa).

Low complexity predominate over residues 1–27; that stretch reads MRWLPQISFSSPSSSPSSSLKPVASYS. Disordered stretches follow at residues 1–42, 74–98, 119–180, and 238–302; these read MRWL…DRFH, ASTS…VPRS, AANA…YWVN, and YDIT…VTNG. Residues 31-40 are compositionally biased toward basic and acidic residues; it reads DPDRNQDRDR. A compositionally biased stretch (polar residues) spans 75 to 91; the sequence is STSSSTFDSGLTRSPSA. Over residues 124–137 the composition is skewed to basic and acidic residues; sequence GLDDRDRDPERLIS. 3 stretches are compositionally biased toward polar residues: residues 138–150, 162–173, and 242–251; these read DRTS…TSVN, ENSSYQDFSPRN, and AFSTDNSPIH. A compositionally biased stretch (low complexity) spans 263-273; sequence RSPQPSRPSSP. The Protein kinase domain maps to 346–607; the sequence is WKKGKLIGRG…ASMLLEHRFL (262 aa). Residues 352 to 360 and lysine 375 contribute to the ATP site; that span reads IGRGTFGSV. Catalysis depends on aspartate 472, which acts as the Proton acceptor. Positions 610–633 are enriched in polar residues; the sequence is SLQPTSPSNSDVSQLFNGMNITEP. Residues 610–716 form a disordered region; that stretch reads SLQPTSPSNS…RRTGVTSDHL (107 aa). Phosphoserine; by PBL27 is present on residues serine 617 and serine 622. Positions 634-648 are enriched in basic and acidic residues; it reads SSRREKPNFKLDQVP. 2 stretches are compositionally biased toward polar residues: residues 652–661 and 674–685; these read NMTSSESESG and LTGTVNRLSPRS. Phosphoserine; by PBL27 is present on residues serine 658 and serine 660. At threonine 677 the chain carries Phosphothreonine; by PBL27. Serine 685 bears the Phosphoserine; by PBL27 mark. A compositionally biased stretch (basic and acidic residues) spans 703 to 716; the sequence is SSDRRRTGVTSDHL.

The protein belongs to the protein kinase superfamily. STE Ser/Thr protein kinase family. MAP kinase kinase kinase subfamily. In terms of assembly, interacts with PBL27 at the plasma membrane; disassociation is induced by chitin perception by the CERK1 complex. Interacts with MKK2, MKK4, and MKK5 mainly in the cytosol. Phosphorylated by PBL27 during chitin-mediated signaling in a CERK1-dependent manner. Mostly expressed in flower buds. Also present in pollen, roots, leaves and seedlings, and, at low levels, in stems and immature siliques.

The protein resides in the cell membrane. It localises to the cytoplasm. Its subcellular location is the cytosol. It catalyses the reaction L-seryl-[protein] + ATP = O-phospho-L-seryl-[protein] + ADP + H(+). The enzyme catalyses L-threonyl-[protein] + ATP = O-phospho-L-threonyl-[protein] + ADP + H(+). Functionally, mitogen-activated protein kinase (MAPK) involved in the transduction of signal between the host cell surface chitin receptor complex CERK1-LYK5 and the intracellular MAPK cascade that leads to chitin-induced immunity. Phosphorylates and activates MAPK targets (e.g. MKK4, MKK5, and possibly MKK2) when phosphorylated by PBL27 after elicitation by chitin. Required for resistance to the fungus A.brassicicola. This Arabidopsis thaliana (Mouse-ear cress) protein is Mitogen-activated protein kinase kinase kinase 5.